An 810-amino-acid chain; its full sequence is Bifunctional aspartokinase/homoserine dehydrogenase 2 (810 aa).

The interval 2–252 is aspartokinase; sequence SVIAQAGAKG…VKDACLLPLL (251 aa). An interface region spans residues 253-463; sequence RLDEASELAR…RAEKRIGLVL (211 aa). A homoserine dehydrogenase region spans residues 464 to 810; the sequence is FGKGNIGSRW…SDINRLAQLL (347 aa). NADP(+) is bound by residues Asn468 and Ile469. 2 residues coordinate NAD(+): Ile469 and Val498. Ile469 serves as a coordination point for NADPH. 3 residues coordinate NADP(+): Arg501, Thr549, and Lys573. Thr549 serves as a coordination point for NAD(+). Residues Thr549 and Lys573 each contribute to the NADPH site. Na(+)-binding residues include Val603, Ala605, and Leu607. Positions 658 and 661 each coordinate NADP(+). Glu661 and Asp672 together coordinate L-homoserine. Lys676 (proton donor) is an active-site residue. Position 791 (Gly791) interacts with NADP(+). Gly791 lines the NAD(+) pocket. NADPH is bound at residue Gly791.

It in the N-terminal section; belongs to the aspartokinase family. In the C-terminal section; belongs to the homoserine dehydrogenase family. As to quaternary structure, homotetramer. A metal cation serves as cofactor.

It catalyses the reaction L-homoserine + NADP(+) = L-aspartate 4-semialdehyde + NADPH + H(+). The enzyme catalyses L-homoserine + NAD(+) = L-aspartate 4-semialdehyde + NADH + H(+). The catalysed reaction is L-aspartate + ATP = 4-phospho-L-aspartate + ADP. It functions in the pathway amino-acid biosynthesis; L-lysine biosynthesis via DAP pathway; (S)-tetrahydrodipicolinate from L-aspartate: step 1/4. It participates in amino-acid biosynthesis; L-methionine biosynthesis via de novo pathway; L-homoserine from L-aspartate: step 1/3. The protein operates within amino-acid biosynthesis; L-methionine biosynthesis via de novo pathway; L-homoserine from L-aspartate: step 3/3. Its pathway is amino-acid biosynthesis; L-threonine biosynthesis; L-threonine from L-aspartate: step 1/5. It functions in the pathway amino-acid biosynthesis; L-threonine biosynthesis; L-threonine from L-aspartate: step 3/5. Its function is as follows. Bifunctional aspartate kinase and homoserine dehydrogenase that catalyzes the first and the third steps toward the synthesis of lysine, methionine and threonine from aspartate. This is Bifunctional aspartokinase/homoserine dehydrogenase 2 (metL) from Escherichia coli (strain K12).